A 137-amino-acid polypeptide reads, in one-letter code: Large ribosomal subunit protein uL16 (137 aa).

Residues 1 to 22 (MLQPKRTKFRKVQKGRNRGLAH) form a disordered region.

Belongs to the universal ribosomal protein uL16 family. Part of the 50S ribosomal subunit.

Functionally, binds 23S rRNA and is also seen to make contacts with the A and possibly P site tRNAs. In Chromohalobacter salexigens (strain ATCC BAA-138 / DSM 3043 / CIP 106854 / NCIMB 13768 / 1H11), this protein is Large ribosomal subunit protein uL16.